Consider the following 403-residue polypeptide: Phosphopentomutase (403 aa).

Residues Asp13, Asp298, His303, Asp339, His340, and His351 each coordinate Mn(2+).

Belongs to the phosphopentomutase family. Requires Mn(2+) as cofactor.

Its subcellular location is the cytoplasm. It catalyses the reaction 2-deoxy-alpha-D-ribose 1-phosphate = 2-deoxy-D-ribose 5-phosphate. It carries out the reaction alpha-D-ribose 1-phosphate = D-ribose 5-phosphate. It participates in carbohydrate degradation; 2-deoxy-D-ribose 1-phosphate degradation; D-glyceraldehyde 3-phosphate and acetaldehyde from 2-deoxy-alpha-D-ribose 1-phosphate: step 1/2. Functionally, isomerase that catalyzes the conversion of deoxy-ribose 1-phosphate (dRib-1-P) and ribose 1-phosphate (Rib-1-P) to deoxy-ribose 5-phosphate (dRib-5-P) and ribose 5-phosphate (Rib-5-P), respectively. In Streptococcus thermophilus (strain ATCC BAA-491 / LMD-9), this protein is Phosphopentomutase.